A 1346-amino-acid chain; its full sequence is Adhesion G protein-coupled receptor A3 (1346 aa).

A signal peptide spans 1–21 (MSVLCVLLLAFVLPLRGSSSA). The disordered stretch occupies residues 18 to 45 (SSSAGSTECKTYDERSRSAGKSSPSGAT). The Extracellular portion of the chain corresponds to 22 to 739 (GSTECKTYDE…NVFIFRPLHP (718 aa)). 4 LRR repeats span residues 66–90 (FPNRTVSLILSNNKIQELLNGSFVG), 91–114 (LSSLERLDIKNNIITHIEPGAFYG), 116–138 (FSLKRLDLSKNLIGCLHVDVFKG), and 139–162 (LTNLVKLNLSENKFSSLSQGIFDS). Residues 176 to 223 (LLCDCNLQWLVVWIKEKAIGVKETRCSFPRSLQGQLITTLRAETLTCD) form the LRRCT domain. In terms of domain architecture, Ig-like spans 229-327 (PSFQMTPSQH…GNNTRTVHIV (99 aa)). An intrachain disulfide couples cysteine 251 to cysteine 311. 3 LRR repeats span residues 503–529 (LQRIALLRVSNGALAYSTNSPNIALEA), 574–600 (TSNLSALALKNTIVEASLQLPPTLFSS), and 611–632 (VYKLHLLAFRNGKLFPPTGNSS). The 166-residue stretch at 563 to 728 (PERQLSFKCN…AVLMDLNRTG (166 aa)) folds into the GAIN-B domain. The tract at residues 679–728 (PAFWNFSLQGGQGGWQSDGCRILHQDDNFTTVSCHSLNSYAVLMDLNRTG) is GPS. Cysteine 698 and cysteine 712 are disulfide-bonded. A helical transmembrane segment spans residues 740–760 (VIYSTALVLVLCLLSVIVSYI). At 761-773 (YHHKSVRISKKCW) the chain is on the cytoplasmic side. The helical transmembrane segment at 774 to 794 (HMLVNLCLHILLTCAVFVGGI) threads the bilayer. Over 795-804 (NQTYNASVCQ) the chain is Extracellular. Residues 805-825 (AMGIVLHYSTLATALWSGVTA) form a helical membrane-spanning segment. Over 826–854 (RNIYKQVTRKAKRYEELDEPPPPPRPMLR) the chain is Cytoplasmic. The helical transmembrane segment at 855 to 875 (FYLIGGGIPIIVCGITAAANI) threads the bilayer. The Extracellular portion of the chain corresponds to 876-897 (KNYGSQVNAPYCWMAWEPSLGA). Residues 898–918 (FYGPAAFIVFVDCMYFLSILI) traverse the membrane as a helical segment. Over 919–977 (QLRRHPERRFELKEQSEEQQHLSVTEATEITPVHLESSPTAQPVPMSALENEHTFVSQL) the chain is Cytoplasmic. Residues 978-998 (MGVAGSLTLYAALWVFGALAI) traverse the membrane as a helical segment. Topologically, residues 999 to 1005 (SQEHPAD) are extracellular. A helical transmembrane segment spans residues 1006–1026 (LVFACLFGALALGLGAFLVAH). Topologically, residues 1027 to 1346 (HCVNRQDMRR…TGLWKHETTV (320 aa)) are cytoplasmic. Positions 1157–1169 (SVNNNNLPGNANI) are enriched in polar residues. Disordered regions lie at residues 1157–1188 (SVNNNNLPGNANITGHPGRHHKNRSRAHRASR) and 1202–1284 (SVEG…DGSE). Composition is skewed to basic residues over residues 1173 to 1187 (PGRHHKNRSRAHRAS) and 1212 to 1226 (NKRHHHESLHARNSR). Residues 1238–1252 (QSQLQQDSSDAASTS) show a composition bias toward low complexity. Gly residues predominate over residues 1266 to 1280 (IGNGFGHGISNGGLL). The PDZ-binding motif lies at 1344–1346 (TTV).

Belongs to the G-protein coupled receptor 2 family. Adhesion G-protein coupled receptor (ADGR) subfamily. As to quaternary structure, interacts (via PDZ-binding motif) with disheveled proteins; leading to the localization of dishevelled proteins to specific membrane subdomains. As to expression, ubiquitously expressed at very low levels.

It localises to the cell membrane. Functionally, orphan receptor that acts as a critical modulator of planar cell polarity during gastrulation. Controls the localization of dishevelled. The polypeptide is Adhesion G protein-coupled receptor A3 (adgra3) (Danio rerio (Zebrafish)).